Here is a 1336-residue protein sequence, read N- to C-terminus: Coiled-coil and C2 domain-containing protein 2A (1336 aa).

2 disordered regions span residues 1–29 and 70–97; these read MEAA…EQEV and VEDC…QTFI. The segment covering 8 to 23 has biased composition (basic residues); the sequence is KTAKKKRKTHTTRGYR. Acidic residues predominate over residues 70 to 89; the sequence is VEDCQESDEDSGGELAEEPT. Residues 136 to 156 adopt a coiled-coil conformation; that stretch reads LSDLSELKDSQIRMLNRYQEQ. One can recognise a C2 domain in the interval 755–915; that stretch reads PREPSGWSGH…LASRTFEGCI (161 aa).

As to quaternary structure, probable component of the tectonic-like complex (also named MKS complex), composed of B9d1, B9d2, Cc2d2a, Mks1 and tctn. As to expression, expressed in the antennae of chordotonal neurons and male germ cells (at protein level).

The protein resides in the cytoplasm. Its subcellular location is the cytoskeleton. It is found in the cilium basal body. It localises to the microtubule organizing center. The protein localises to the centrosome. The protein resides in the centriole. Functionally, probable component of the tectonic-like complex (also named MKS complex), a complex localized at the transition zone of primary cilia. Required for ciliary structure and function. The sequence is that of Coiled-coil and C2 domain-containing protein 2A from Drosophila melanogaster (Fruit fly).